We begin with the raw amino-acid sequence, 396 residues long: Tryptophan synthase beta chain (396 aa).

Lys86 is subject to N6-(pyridoxal phosphate)lysine.

It belongs to the TrpB family. In terms of assembly, tetramer of two alpha and two beta chains. Pyridoxal 5'-phosphate is required as a cofactor.

The enzyme catalyses (1S,2R)-1-C-(indol-3-yl)glycerol 3-phosphate + L-serine = D-glyceraldehyde 3-phosphate + L-tryptophan + H2O. The protein operates within amino-acid biosynthesis; L-tryptophan biosynthesis; L-tryptophan from chorismate: step 5/5. Functionally, the beta subunit is responsible for the synthesis of L-tryptophan from indole and L-serine. The sequence is that of Tryptophan synthase beta chain from Yersinia pseudotuberculosis serotype O:1b (strain IP 31758).